The primary structure comprises 782 residues: MMDLEPQESLTAPTAPAIGATAVMEKDKSLLIPQDAPVEQNLGYETPPEEFEGFLQIQKQPNEQNAGLEDHDYLNEGDVLFKHLQRQSTIVRDAISDRSSIPVSIAELSCIYERNLFSPRVPPKRQANGTCEPNPRLNFYPVFAVPEALATYHIFFKNHKIPLSCRANRSRADELLALRAGASIPGIVSLEEVPKIFEGLGRDEKRAANALQKENEQNHHGNSALIELEGDNARLAVLKRNIEVTHFAYPAVNLPPKVMSAVMNQLLIKRAQPIDKDANLQDPEATDDGKPVVSDEQLTKWLGTDNSNELQQRRKLMMAAVLVTVELECMHRFFSDITTLRKIEECLHYTFRHGYVRQACKISNVELSNLVSYMGILHENRLGQNVLHSTLRDEARRDYVRDCIYLFLLHTWQTGMGVWQQCLEEKNLRELNKLLDRALKSLWTGFDERTVAAELADIIFPERLMITLQNGLPDFMSQSMLHNYRSFILERSGMLPSMCCALPSDFVPIYFRECPPPLWSHCYLLRLANYLAYHSDLMTDSSGEGLMECHCRCNLCTPHRSLVCNTELLSESQVIGTFEMQGPQSDSNFTTNLRLTPGLWTSAYLRKFEPQDYHAHSINFYEDQSKPPKAPLTACVITQGKILAQLHAIKQAREEFLLKKGHGVYLDPQTGEELNLPSPLCATASPHSQHVPESRKTGYCAATLKETAATAGNLGGRILGESGRGRGRGLGRMGGGGGGQPRRGSRGGGGRFQGRSDRRQTVAFNQALSNETRCEQISESQP.

The tract at residues 262–329 is binding to host EIF4G; the sequence is VMNQLLIKRA…AVLVTVELEC (68 aa). In terms of domain architecture, RRM spans 332 to 450; it reads RFFSDITTLR…SLWTGFDERT (119 aa). Residues Tyr349 and Tyr665 each carry the phosphotyrosine; by host modification. The interval 715–760 is disordered; it reads GGRILGESGRGRGRGLGRMGGGGGGQPRRGSRGGGGRFQGRSDRRQ. The segment covering 728 to 752 has biased composition (gly residues); the sequence is RGLGRMGGGGGGQPRRGSRGGGGRF.

It belongs to the adenoviridae shutoff protein family. Monomer. Interacts with hexon protein; this interaction allows chaperoning and trimerization of hexon proteins. Interacts (via N-terminus) with host initiation factor EIF4G (via C-terminus). Interacts (via RRM domain) with viral mRNAs that contain the tripartite leader; this interaction allows ribosome shunting and expression of viral late mRNAs. Post-translationally, might be cleaved by the viral protease. Phosphorylated. Tyrosine phosphorylation enhances preferential binding to tripartite leader mRNAs and allows ribosome shunting. In terms of processing, methylated. Asymmetric dimethylation by host PRMT1 of the Arg/Gly-rich region may regulate shutoff protein binding to hexon and promote the capsid assembly in the nucleus.

The protein localises to the host cytoplasm. Functionally, protein that inhibits host translation while promoting late viral translation by ribosome shunting. Blocks host cap-dependent translation by binding to eIF4G, displacing MKNK1 from cap initiation complexes and preventing EIF4E phosphorylation. Binds to the tripartite leader sequence of viral late mRNAs and recruits host eIF4G, PABPC1/poly-A binding protein and 40S ribosomes subunits on viral mRNAs, allowing ribosome shunting and efficient translation of late viral mRNAs even though conventional translation via ribosome scanning from the cap has been shut off in the host cell. During assembly, acts as a chaperone protein that helps hexon proteins assembly into trimers. In Human adenovirus A serotype 12 (HAdV-12), this protein is Shutoff protein.